Here is a 784-residue protein sequence, read N- to C-terminus: Probable aminopeptidase 1 (784 aa).

Residues E103 and 236–240 (GAMEN) contribute to the substrate site. H271 provides a ligand contact to Zn(2+). Residue E272 is the Proton acceptor of the active site. Zn(2+) contacts are provided by H275 and E294.

Belongs to the peptidase M1 family. It depends on Zn(2+) as a cofactor.

The protein resides in the cytoplasm. In Saccharolobus solfataricus (strain ATCC 35092 / DSM 1617 / JCM 11322 / P2) (Sulfolobus solfataricus), this protein is Probable aminopeptidase 1 (ape1).